We begin with the raw amino-acid sequence, 247 residues long: Probable cyclic nucleotide phosphodiesterase XBJ1_0953 (247 aa).

Residues aspartate 8, histidine 10, aspartate 52, asparagine 82, histidine 154, histidine 192, and histidine 194 each contribute to the Fe cation site. AMP is bound by residues histidine 10, aspartate 52, and 82-83; that span reads NH. Histidine 194 contributes to the AMP binding site.

Belongs to the cyclic nucleotide phosphodiesterase class-III family. Requires Fe(2+) as cofactor.

The sequence is that of Probable cyclic nucleotide phosphodiesterase XBJ1_0953 from Xenorhabdus bovienii (strain SS-2004) (Xenorhabdus nematophila subsp. bovienii).